The primary structure comprises 801 residues: Putative mRNA-capping enzyme P5 (801 aa).

This sequence belongs to the phytoreovirus protein P5 family.

Its subcellular location is the virion. It localises to the host cytoplasm. The enzyme catalyses a 5'-end diphospho-ribonucleoside in mRNA + GTP + H(+) = a 5'-end (5'-triphosphoguanosine)-ribonucleoside in mRNA + diphosphate. It functions in the pathway mRNA processing; mRNA capping. Its function is as follows. Enzyme involved in mRNA capping (Potential). Binds to GTP and might have guanylyltransferase activity. Together with the RNA-directed RNA polymerase P1 and protein P7, forms an transcriptional complex positioned near the channels situated at each of the five-fold vertices of the core. The sequence is that of Putative mRNA-capping enzyme P5 from Alopecurus aequalis (Barnyard grass).